The sequence spans 85 residues: Large ribosomal subunit protein bL27 (85 aa).

Belongs to the bacterial ribosomal protein bL27 family.

The chain is Large ribosomal subunit protein bL27 from Campylobacter hominis (strain ATCC BAA-381 / DSM 21671 / CCUG 45161 / LMG 19568 / NCTC 13146 / CH001A).